Consider the following 393-residue polypeptide: Acetylornithine aminotransferase (393 aa).

Pyridoxal 5'-phosphate contacts are provided by residues 105-106 and phenylalanine 138; that span reads GA. Residue arginine 141 coordinates N(2)-acetyl-L-ornithine. 224 to 227 provides a ligand contact to pyridoxal 5'-phosphate; it reads DEVQ. Residue lysine 253 is modified to N6-(pyridoxal phosphate)lysine. N(2)-acetyl-L-ornithine is bound at residue serine 281. Threonine 282 contributes to the pyridoxal 5'-phosphate binding site.

The protein belongs to the class-III pyridoxal-phosphate-dependent aminotransferase family. ArgD subfamily. In terms of assembly, homodimer. Requires pyridoxal 5'-phosphate as cofactor.

The protein localises to the cytoplasm. It carries out the reaction N(2)-acetyl-L-ornithine + 2-oxoglutarate = N-acetyl-L-glutamate 5-semialdehyde + L-glutamate. The protein operates within amino-acid biosynthesis; L-arginine biosynthesis; N(2)-acetyl-L-ornithine from L-glutamate: step 4/4. The sequence is that of Acetylornithine aminotransferase from Haemophilus ducreyi (strain 35000HP / ATCC 700724).